The primary structure comprises 520 residues: Sodium-dependent dicarboxylate transporter SdcS (520 aa).

14 helical membrane passes run 30 to 50, 55 to 75, 77 to 97, 104 to 124, 160 to 180, 207 to 227, 242 to 262, 298 to 318, 323 to 343, 362 to 382, 399 to 419, 428 to 448, 452 to 472, and 491 to 511; these read AGQLIGLILGPLLFLLTLLFF, LPWEGVYVLAITLWIATWWIT, AIPIAATSLLPIVLLPLGHIL, SEYGNDIIFLFLGGFILAIAM, SMFVSNTAAVMIMIPIGLAII, IGYAGTIGGLGTLIGTPPLII, FAKWMIVGIPTVIVLLGITWL, KVVQTIFVLASLLWITREFLL, VTSSVADGTIAIFISILLFVI, ELPWGVLILFGGGLALAKGIS, GVSPILIVIVITIFVLFLTEV, MILPILATLSVAVGVHPLLLM, AMAANCAYMLPVGTPPNAIIF, and LISAIIIILVVYYVMPIVLGI.

The protein belongs to the SLC13A/DASS transporter (TC 2.A.47) family. NADC subfamily.

The protein localises to the cell membrane. Its function is as follows. Mediates the transport of the dicarboxylates fumarate, malate, and succinate across the cytoplasmic membrane via a Na(+)-electrochemical gradient. This is Sodium-dependent dicarboxylate transporter SdcS (sdcS) from Staphylococcus aureus (strain bovine RF122 / ET3-1).